We begin with the raw amino-acid sequence, 445 residues long: Proline--tRNA ligase (445 aa).

Belongs to the class-II aminoacyl-tRNA synthetase family. ProS type 2 subfamily. As to quaternary structure, homodimer.

It localises to the cytoplasm. It carries out the reaction tRNA(Pro) + L-proline + ATP = L-prolyl-tRNA(Pro) + AMP + diphosphate. Its function is as follows. Catalyzes the attachment of proline to tRNA(Pro) in a two-step reaction: proline is first activated by ATP to form Pro-AMP and then transferred to the acceptor end of tRNA(Pro). This chain is Proline--tRNA ligase, found in Cereibacter sphaeroides (strain ATCC 17025 / ATH 2.4.3) (Rhodobacter sphaeroides).